Here is a 53-residue protein sequence, read N- to C-terminus: Ribulose bisphosphate carboxylase large chain (53 aa).

Positions 1 to 2 (MS) are excised as a propeptide. An N-acetylproline modification is found at proline 3. The residue at position 14 (lysine 14) is an N6,N6,N6-trimethyllysine.

It belongs to the RuBisCO large chain family. Type I subfamily. In terms of assembly, heterohexadecamer of 8 large chains and 8 small chains.

Its subcellular location is the plastid. The protein localises to the chloroplast. The enzyme catalyses 2 (2R)-3-phosphoglycerate + 2 H(+) = D-ribulose 1,5-bisphosphate + CO2 + H2O. It catalyses the reaction D-ribulose 1,5-bisphosphate + O2 = 2-phosphoglycolate + (2R)-3-phosphoglycerate + 2 H(+). Its function is as follows. RuBisCO catalyzes two reactions: the carboxylation of D-ribulose 1,5-bisphosphate, the primary event in carbon dioxide fixation, as well as the oxidative fragmentation of the pentose substrate in the photorespiration process. Both reactions occur simultaneously and in competition at the same active site. In Malus domestica (Apple), this protein is Ribulose bisphosphate carboxylase large chain (rbcL).